The following is a 315-amino-acid chain: Secreted mono- and diacylglycerol lipase LIP2 (315 aa).

The N-terminal stretch at Met1–Ala21 is a signal peptide. Cys68 and Cys308 form a disulfide bridge. N-linked (GlcNAc...) asparagine glycosylation occurs at Asn74. Ser182 serves as the catalytic Nucleophile. Asp240 is a catalytic residue. Residue Asn265 is glycosylated (N-linked (GlcNAc...) asparagine). His292 is a catalytic residue.

The protein belongs to the AB hydrolase superfamily. Lipase family. Class 3 subfamily.

The protein localises to the secreted. The catalysed reaction is a monoacylglycerol + H2O = glycerol + a fatty acid + H(+). The enzyme catalyses a diacylglycerol + H2O = a monoacylglycerol + a fatty acid + H(+). Secreted lipase involved in Dandruff and seborrheic dermatitis (D/SD) probably via lipase-mediated breakdown of sebaceous lipids and release of irritating free fatty acids. Shows activity against monoglyceride and diglyceride substrates and generates free oleic acid from the substrates mono- and diolein. Able to cleave the oleic acid from both the 1 and the 2 position of the glycerol backbone as 1,2 isomers of diolein were converted into oleic acid and glycerol. Due to an absence of fatty acid synthase genes in Malassezia species, secretory lipases are essential for the yeast to generate free fatty acids from degradation of sebum and assimilate them as lipid sources for growth. Plays an essential role at the pathogen-host interface during disease progression. Also performs the reverse reaction to build diacylglycerols from monoacylglycerols. The chain is Secreted mono- and diacylglycerol lipase LIP2 from Malassezia restricta (Seborrheic dermatitis infection agent).